Here is a 560-residue protein sequence, read N- to C-terminus: MNQRLIIKTALSAAILASLAGCASQPAHEWNADTTYKLTVLHTNDHHGRFWQNKHGEYGMAARKTLIDDLRDEIQAEGGSVLLLSGGDINTGVPESDLQDAEPDFKGMSKIGYDAMALGNHEFDNPLDVLFKQQDWANFPMLSANIYDKKTGKRLFQPYAMFNKQGIKIAVIGLTTEDTAKLGNPEFIGQVDFRDPKVEAKELIAELKKTENPDLIFAVTHMGHYENGNRGINAPGDVALARYLNEGDLDMIVGGHSQEPVCMEGPNVIKKNFKPGDECQPDQQNGTYIVQAHEWGKYVGRADYEFRNGELSMVSYDLIPVNLKKKINVDGQSQRVFVQDEITQDKAMLDFLRPFQEKGQSQLNVKIAESNGKLEGDRDVVRFQQTNLGRLIATAHMERAKADFAVMNSGGVRDSIEAGDITYKDVLTVQPFGNMVSYVDMSGQEVLDYLNIVATKPVDSGAYAQFAGISMRIENDKVTNVFIGNKQLRLDGRYRFTVPSYNASGGDGYPKIDTHPGYVNTGFTDAEVLKDYLESHSPIDVNEYAPSGEVMYQTNNVVNQ.

Positions 1–21 are cleaved as a signal peptide; it reads MNQRLIIKTALSAAILASLAG. A lipid anchor (N-palmitoyl cysteine) is attached at Cys22. Cys22 carries S-diacylglycerol cysteine lipidation. Asp45, His47, Asp88, Asn120, His221, His256, and Gln258 together coordinate a divalent metal cation. Residues Phe432 and 501 to 507 each bind substrate; that span reads YNASGGD.

Belongs to the 5'-nucleotidase family. It depends on chloride as a cofactor. Requires Mg(2+) as cofactor.

The protein localises to the cell outer membrane. It carries out the reaction a ribonucleoside 5'-phosphate + H2O = a ribonucleoside + phosphate. Degradation of extracellular 5'-nucleotides for nutritional needs. The sequence is that of 5'-nucleotidase (nutA) from Vibrio parahaemolyticus serotype O3:K6 (strain RIMD 2210633).